We begin with the raw amino-acid sequence, 42 residues long: Photosystem II reaction center protein J (42 aa).

A helical transmembrane segment spans residues 10–30 (IPLWLVGTVVGTLALGLVALF).

Belongs to the PsbJ family. In terms of assembly, PSII is composed of 1 copy each of membrane proteins PsbA, PsbB, PsbC, PsbD, PsbE, PsbF, PsbH, PsbI, PsbJ, PsbK, PsbL, PsbM, PsbT, PsbX, PsbY, PsbZ, Psb30/Ycf12, at least 3 peripheral proteins of the oxygen-evolving complex and a large number of cofactors. It forms dimeric complexes.

The protein resides in the plastid. It is found in the chloroplast thylakoid membrane. One of the components of the core complex of photosystem II (PSII). PSII is a light-driven water:plastoquinone oxidoreductase that uses light energy to abstract electrons from H(2)O, generating O(2) and a proton gradient subsequently used for ATP formation. It consists of a core antenna complex that captures photons, and an electron transfer chain that converts photonic excitation into a charge separation. This Oltmannsiellopsis viridis (Marine flagellate) protein is Photosystem II reaction center protein J.